The following is a 166-amino-acid chain: Lipoprotein signal peptidase (166 aa).

A run of 4 helical transmembrane segments spans residues Ala-9 to Leu-29, Ala-45 to Leu-65, Trp-71 to Leu-91, and Phe-100 to Val-120. Catalysis depends on residues Asp-126 and Asp-144. A helical transmembrane segment spans residues Trp-135–Ile-155.

It belongs to the peptidase A8 family.

Its subcellular location is the cell inner membrane. The catalysed reaction is Release of signal peptides from bacterial membrane prolipoproteins. Hydrolyzes -Xaa-Yaa-Zaa-|-(S,diacylglyceryl)Cys-, in which Xaa is hydrophobic (preferably Leu), and Yaa (Ala or Ser) and Zaa (Gly or Ala) have small, neutral side chains.. It participates in protein modification; lipoprotein biosynthesis (signal peptide cleavage). Functionally, this protein specifically catalyzes the removal of signal peptides from prolipoproteins. This is Lipoprotein signal peptidase from Burkholderia multivorans (strain ATCC 17616 / 249).